The sequence spans 310 residues: Protoheme IX farnesyltransferase 2 (310 aa).

Helical transmembrane passes span 25 to 45 (PGIIFGNLISVAGGFLLAAKG), 49 to 69 (LVLMLASLVGLSLVVASGCAI), 98 to 118 (HVLLFGIAIGVLGFGILALFT), 121 to 141 (LALLFAAIGYVVYVGIYSLYM), 145 to 165 (SVYGTLVGSFSGAVPPVVGYC), 176 to 196 (VILLLMFSLWQMPHSYAIAIF), 222 to 242 (IVLYIAVFALVSTMLPLAGYT), 245 to 265 (AFMAVTCATSLWWLTMALKGY), and 277 to 297 (QVFGFSIITITALSVTMALDF).

The protein belongs to the UbiA prenyltransferase family. Protoheme IX farnesyltransferase subfamily.

Its subcellular location is the cell inner membrane. The catalysed reaction is heme b + (2E,6E)-farnesyl diphosphate + H2O = Fe(II)-heme o + diphosphate. It functions in the pathway porphyrin-containing compound metabolism; heme O biosynthesis; heme O from protoheme: step 1/1. Converts heme B (protoheme IX) to heme O by substitution of the vinyl group on carbon 2 of heme B porphyrin ring with a hydroxyethyl farnesyl side group. This is Protoheme IX farnesyltransferase 2 from Shewanella sp. (strain MR-7).